The chain runs to 437 residues: Doublesex- and mab-3-related transcription factor A2 (437 aa).

Residues 49-96 constitute a DNA-binding region (DM); it reads CARCRNHGVVSALKGHKRYCRWKDCMCAKCTLIAERQRVMAAQVALRR. Disordered regions lie at residues 163 to 254 and 297 to 317; these read SVTP…ARQR and DKSEETWSRDGALPSIQPSVS. 2 stretches are compositionally biased toward low complexity: residues 179-201 and 223-235; these read SESVSGSAPGASSPEARPGSGSE and SPSSISPLGSESG. The 36-residue stretch at 254–289 folds into the DMA domain; sequence RTPIDILTRVFPAQKRSVLELVLQGCGGDVVQAIEQ.

This sequence belongs to the DMRT family.

It localises to the nucleus. Functionally, may be involved in sexual development. The sequence is that of Doublesex- and mab-3-related transcription factor A2 (dmrta2) from Xenopus tropicalis (Western clawed frog).